We begin with the raw amino-acid sequence, 346 residues long: Thioredoxin domain-containing protein R362 (346 aa).

The region spanning 212–345 (LTNLSNTEAN…IVKFIDETMS (134 aa)) is the Thioredoxin domain.

The protein resides in the virion. This Acanthamoeba polyphaga (Amoeba) protein is Thioredoxin domain-containing protein R362.